Reading from the N-terminus, the 134-residue chain is Bet1-like protein At1g29060 (134 aa).

The segment covering 1–12 (MASNRGAGGSLY) has biased composition (gly residues). Residues 1–31 (MASNRGAGGSLYGGADPYRSREGLSTRNASG) form a disordered region. Residues 1–110 (MASNRGAGGS…LSIIRSGNNH (110 aa)) lie on the Cytoplasmic side of the membrane. In terms of domain architecture, t-SNARE coiled-coil homology spans 40 to 102 (DPMHSDLDDE…KNNIRKLNLS (63 aa)). A helical; Anchor for type IV membrane protein transmembrane segment spans residues 111–131 (IMHVVLFALLLFFILYMWSKM). Topologically, residues 132-134 (FKR) are vesicular.

It belongs to the BET1 family.

Its subcellular location is the golgi apparatus membrane. It is found in the endoplasmic reticulum membrane. Required for vesicular transport from the ER to the Golgi complex. Functions as a SNARE associated with ER-derived vesicles. The sequence is that of Bet1-like protein At1g29060 from Arabidopsis thaliana (Mouse-ear cress).